A 1381-amino-acid polypeptide reads, in one-letter code: MKAPAVLVPGILVLLFTLVQRSNGECKEALAKSEMNVNMKYQLPNFTAETAIQNVILHEHHIFLGATNYIYVLNEEDLQKVAEYKTGPVLEHPDCFPCQDCSSKANLSGGVWKDNINMALVVDTYYDDQLISCGSVNRGTCQRHVFPHNHTADIQSEVHCIFSPQIEEPSQCPDCVVSALGAKVLSSVKDRFINFFVGNTINSSYFPHHPLHSISVRRLKETKDGFMFLTDQSYIDVLPEFRDSYPIKYIHAFESNNFIYFLTVQRETLNAQTFHTRIIRFCSLNSGLHSYMEMPLECILTEKRKKRSTKKEVFNILQAAYVSKPGAQLARQIGASLNDDILFGVFAQSKPDSAEPMDRSAMCAFPIKYVNDFFNKIVNKNNVRCLQHFYGPNHEHCFNRTLLRNSSGCEARRDEYRAEFTTALQRVDLFMGQFSEVLLTSISTFVKGDLTIANLGTSEGRFMQVVVSRSGPSTPHVNFLLDSHPVSPEVIVEHPLNQNGYTLVVTGKKITKIPLNGLGCRHFQSCSQCLSAPPFVQCGWCHDKCVRSEECPSGTWTQQICLPAIYKVFPTSAPLEGGTRLTICGWDFGFRRNNKFDLKKTRVLLGNESCTLTLSESTMNILKCTVGPAMNKHFNMSIIISNGHGTTQYSTFSYVDPIITSISPKYGPMAGGTLLTLTGNYLNSGNSRHISIGGKTCTLKSVSNSILECYTPAQTISTEFAVKLKIDLANRETSIFSYREDPIVYEIHPTKSFISGGSTITGVGKNLHSVSVPRMVINVHEAGRNFTVACQHRSNSEIICCTTPSLQQLNLQLPLKTKAFFMLDGILSKYFDLIYVHNPVFKPFEKPVMISMGNENVLEIKGNDIDPEAVKGEVLKVGNKSCENIHLHSEAVLCTVPNDLLKLNSELNIEWKQAISSTVLGKVIVQPDQNFTGLIAGVVSISIALLLLLGLFLWLKKRKQIKDLGSELVRYDARVHTPHLDRLVSARSVSPTTEMVSNESVDYRATFPEDQFPNSSQNGSCRQVQYPLTDMSPILTSGDSDISSPLLQNTVHIDLSALNPELVQAVQHVVIGPSSLIVHFNEVIGRGHFGCVYHGTLLDNDGKKIHCAVKSLNRITDIGEVSQFLTEGIIMKDFSHPNVLSLLGICLRSEGSPLVVLPYMKHGDLRNFIRNETHNPTVKDLIGFGLQVAKGMKYLASKKFVHRDLAARNCMLDEKFTVKVADFGLARDMYDKEYYSVHNKTGAKLPVKWMALESLQTQKFTTKSDVWSFGVLLWELMTRGAPPYPDVNTFDITVYLLQGRRLLQPEYCPDPLYEVMLKCWHPKAEMRPSFSELVSRISAIFSTFIGEHYVHVNATYVNVKCVAPYPSLLSSEDNADDEVDT.

Positions 1–24 (MKAPAVLVPGILVLLFTLVQRSNG) are cleaved as a signal peptide. At 25–932 (ECKEALAKSE…VIVQPDQNFT (908 aa)) the chain is on the extracellular side. The region spanning 27–515 (KEALAKSEMN…TGKKITKIPL (489 aa)) is the Sema domain. N-linked (GlcNAc...) asparagine glycosylation is present at Asn45. Intrachain disulfides connect Cys95-Cys101, Cys98-Cys160, Cys133-Cys141, and Cys172-Cys175. N-linked (GlcNAc...) asparagine glycosylation is present at Asn106. Asn149 carries N-linked (GlcNAc...) asparagine glycosylation. An N-linked (GlcNAc...) asparagine glycan is attached at Asn202. 2 disulfides stabilise this stretch: Cys298/Cys363 and Cys385/Cys397. Residues Asn399 and Asn405 are each glycosylated (N-linked (GlcNAc...) asparagine). Disulfide bonds link Cys520–Cys538, Cys526–Cys561, Cys529–Cys545, and Cys541–Cys551. 3 IPT/TIG domains span residues 563-655 (PAIY…FSYV), 657-739 (PIIT…FSYR), and 742-836 (PIVY…LIYV). Thr582 carries O-linked (Man) threonine glycosylation. Asn607 and Asn635 each carry an N-linked (GlcNAc...) asparagine glycan. O-linked (Man) threonine glycosylation is found at Thr676 and Thr761. N-linked (GlcNAc...) asparagine glycans are attached at residues Asn785, Asn879, and Asn930. Residues 933-955 (GLIAGVVSISIALLLLLGLFLWL) form a helical membrane-spanning segment. The Cytoplasmic portion of the chain corresponds to 956 to 1381 (KKRKQIKDLG…EDNADDEVDT (426 aa)). The residue at position 966 (Ser966) is a Phosphoserine. Thr977 bears the Phosphothreonine mark. Phosphoserine is present on residues Ser990, Ser997, and Ser1000. The residue at position 1003 (Tyr1003) is a Phosphotyrosine. Positions 1078 to 1345 (VHFNEVIGRG…RISAIFSTFI (268 aa)) constitute a Protein kinase domain. Residues 1084–1092 (IGRGHFGCV) and Lys1110 each bind ATP. Asp1204 acts as the Proton acceptor in catalysis. The interaction with RANBP9 stretch occupies residues 1212 to 1381 (LDEKFTVKVA…EDNADDEVDT (170 aa)). Position 1230 is a phosphotyrosine (Tyr1230). A phosphotyrosine; by autocatalysis mark is found at Tyr1234 and Tyr1235. Thr1289 carries the phosphothreonine modification. The tract at residues 1320–1359 (WHPKAEMRPSFSELVSRISAIFSTFIGEHYVHVNATYVNV) is interaction with MUC20. Phosphotyrosine; by autocatalysis occurs at positions 1349 and 1356. The residue at position 1365 (Tyr1365) is a Phosphotyrosine.

It belongs to the protein kinase superfamily. Tyr protein kinase family. Heterodimer made of an alpha chain (50 kDa) and a beta chain (145 kDa) which are disulfide linked. Binds PLXNB1. Interacts when phosphorylated with downstream effectors including STAT3, PIK3R1, SRC, PCLG1, GRB2 and GAB1. Interacts with SPSB1, SPSB2 and SPSB4. Interacts with INPP5D/SHIP1. When phosphorylated at Tyr-1356, interacts with INPPL1/SHIP2. Interacts with RANBP9 and RANBP10, as well as SPSB1, SPSB2, SPSB3 and SPSB4. SPSB1 binding occurs in the presence and in the absence of HGF, however HGF treatment has a positive effect on this interaction. Interacts with MUC20; prevents interaction with GRB2 and suppresses hepatocyte growth factor-induced cell proliferation. Interacts with GRB10. Interacts with PTPN1 and PTPN2. Interacts with HSP90AA1 and HSP90AB1; the interaction suppresses MET kinase activity. Interacts with tensin TNS3. Interacts (when phosphorylated) with tensin TNS4 (via SH2 domain); the interaction increases MET protein stability by inhibiting MET endocytosis and subsequent lysosomal degradation. Autophosphorylated in response to ligand binding on Tyr-1234 and Tyr-1235 in the kinase domain leading to further phosphorylation of Tyr-1349 and Tyr-1356 in the C-terminal multifunctional docking site. Dephosphorylated by PTPRJ at Tyr-1349 and Tyr-1365. Dephosphorylated by PTPN1 and PTPN2. In terms of processing, ubiquitinated. Ubiquitination by CBL regulates the receptor stability and activity through proteasomal degradation. Post-translationally, O-mannosylation of IPT/TIG domains by TMEM260 is required for protein maturation. O-mannosylated residues are composed of single mannose glycans that are not elongated or modified.

The protein resides in the membrane. The enzyme catalyses L-tyrosyl-[protein] + ATP = O-phospho-L-tyrosyl-[protein] + ADP + H(+). With respect to regulation, in its inactive state, the C-terminal tail interacts with the catalytic domain and inhibits the kinase activity. Upon ligand binding, the C-terminal tail is displaced and becomes phosphorylated, thus increasing the kinase activity. In terms of biological role, receptor tyrosine kinase that transduces signals from the extracellular matrix into the cytoplasm by binding to hepatocyte growth factor/HGF ligand. Regulates many physiological processes including proliferation, scattering, morphogenesis and survival. Ligand binding at the cell surface induces autophosphorylation of MET on its intracellular domain that provides docking sites for downstream signaling molecules. Following activation by ligand, interacts with the PI3-kinase subunit PIK3R1, PLCG1, SRC, GRB2, STAT3 or the adapter GAB1. Recruitment of these downstream effectors by MET leads to the activation of several signaling cascades including the RAS-ERK, PI3 kinase-AKT, or PLCgamma-PKC. The RAS-ERK activation is associated with the morphogenetic effects while PI3K/AKT coordinates prosurvival effects. During embryonic development, MET signaling plays a role in gastrulation, development and migration of muscles and neuronal precursors, angiogenesis and kidney formation. In adults, participates in wound healing as well as organ regeneration and tissue remodeling. Also promotes differentiation and proliferation of hematopoietic cells. In Papio anubis (Olive baboon), this protein is Hepatocyte growth factor receptor (MET).